Here is a 228-residue protein sequence, read N- to C-terminus: UPF0173 metal-dependent hydrolase lwe1590 (228 aa).

It belongs to the UPF0173 family.

This Listeria welshimeri serovar 6b (strain ATCC 35897 / DSM 20650 / CCUG 15529 / CIP 8149 / NCTC 11857 / SLCC 5334 / V8) protein is UPF0173 metal-dependent hydrolase lwe1590.